The primary structure comprises 266 residues: MDFVAKNLTKLRETNPLVQNITNYVVMNSTANSLLALGASPVMAHAMDELEEMVSIASSLVINIGTLDEYWIPPMEKAAKIASDLKKPIILDPVGAGATKLRTNTALKILDFADISVLRGNFGEIAAVLGEHGKTKGVDSAAYDSNEAIELSKNAAKEFNTVSAVTGPIDYVSNGKEIYAISNGHPMLSKVTGTGCATTSIIGAFSAVDEPIKAAVSGLTVYGISAEMAFGEAPYPGTFQAKVYDWLYRIDEELVLEKAKVNKFEI.

M43 contributes to the substrate binding site. Residues R119 and T166 each coordinate ATP. G193 is a substrate binding site.

It belongs to the Thz kinase family. It depends on Mg(2+) as a cofactor.

It catalyses the reaction 5-(2-hydroxyethyl)-4-methylthiazole + ATP = 4-methyl-5-(2-phosphooxyethyl)-thiazole + ADP + H(+). The protein operates within cofactor biosynthesis; thiamine diphosphate biosynthesis; 4-methyl-5-(2-phosphoethyl)-thiazole from 5-(2-hydroxyethyl)-4-methylthiazole: step 1/1. Catalyzes the phosphorylation of the hydroxyl group of 4-methyl-5-beta-hydroxyethylthiazole (THZ). The protein is Hydroxyethylthiazole kinase of Methanococcus maripaludis (strain C6 / ATCC BAA-1332).